A 292-amino-acid polypeptide reads, in one-letter code: D-tagatose-1,6-bisphosphate aldolase subunit KbaY (292 aa).

Catalysis depends on aspartate 82, which acts as the Proton donor. The Zn(2+) site is built by histidine 83 and histidine 180. Glycine 181 is a binding site for dihydroxyacetone phosphate. Histidine 208 serves as a coordination point for Zn(2+). Residues 209-211 (GAS) and 230-233 (NVAT) contribute to the dihydroxyacetone phosphate site.

It belongs to the class II fructose-bisphosphate aldolase family. TagBP aldolase KbaY subfamily. In terms of assembly, homotetramer. Forms a complex with KbaZ. The cofactor is Zn(2+).

The catalysed reaction is D-tagatofuranose 1,6-bisphosphate = D-glyceraldehyde 3-phosphate + dihydroxyacetone phosphate. It participates in carbohydrate metabolism; D-tagatose 6-phosphate degradation; D-glyceraldehyde 3-phosphate and glycerone phosphate from D-tagatose 6-phosphate: step 2/2. Catalytic subunit of the tagatose-1,6-bisphosphate aldolase KbaYZ, which catalyzes the reversible aldol condensation of dihydroxyacetone phosphate (DHAP or glycerone-phosphate) with glyceraldehyde 3-phosphate (G3P) to produce tagatose 1,6-bisphosphate (TBP). Requires KbaZ subunit for full activity and stability. In Enterobacter sp. (strain 638), this protein is D-tagatose-1,6-bisphosphate aldolase subunit KbaY.